A 140-amino-acid chain; its full sequence is 3-hydroxyacyl-[acyl-carrier-protein] dehydratase FabZ (140 aa).

Residue His-48 is part of the active site.

This sequence belongs to the thioester dehydratase family. FabZ subfamily.

Its subcellular location is the cytoplasm. The enzyme catalyses a (3R)-hydroxyacyl-[ACP] = a (2E)-enoyl-[ACP] + H2O. Involved in unsaturated fatty acids biosynthesis. Catalyzes the dehydration of short chain beta-hydroxyacyl-ACPs and long chain saturated and unsaturated beta-hydroxyacyl-ACPs. This chain is 3-hydroxyacyl-[acyl-carrier-protein] dehydratase FabZ, found in Caldicellulosiruptor saccharolyticus (strain ATCC 43494 / DSM 8903 / Tp8T 6331).